Consider the following 275-residue polypeptide: Phosphite transport system permease protein PtxC (275 aa).

Helical transmembrane passes span 30 to 50, 88 to 108, 136 to 156, 221 to 241, and 249 to 269; these read LGQVAIVFGVVLLACWYVGLL, LAMSIAGTAIAVVFSLVVAFV, LIMGIIFVAAVGFGALPGVLA, ASTVMGMVGAGGIGFELMGSL, and VAAILLVILAMVTLVDAFSGV. The ABC transmembrane type-1 domain maps to 84-267; it reads LIDTLAMSIA…AMVTLVDAFS (184 aa).

The protein belongs to the binding-protein-dependent transport system permease family.

The protein resides in the cell inner membrane. Functionally, probably forms part of a binding-protein-dependent phosphite transporter. Probably responsible for the translocation of the substrate across the membrane. The protein is Phosphite transport system permease protein PtxC (ptxC) of Stutzerimonas stutzeri (Pseudomonas stutzeri).